The following is a 340-amino-acid chain: Annexin A2-A (340 aa).

The interval 2 to 25 (ALIHEILGKLSLEGNQSCARQSAL) is P10 binding site. 4 Annexin repeats span residues 34–105 (FDAE…GLIK), 106–177 (TRPQ…ALAK), 190–262 (EKID…NLVQ), and 266–337 (NKPL…NLCG).

This sequence belongs to the annexin family. Tetramer of 2 light chains (p10 proteins) and 2 heavy chains (p36 proteins).

It localises to the secreted. The protein localises to the extracellular space. Its subcellular location is the extracellular matrix. It is found in the basement membrane. In terms of biological role, calcium-regulated membrane-binding protein whose affinity for calcium is greatly enhanced by anionic phospholipids. It binds two calcium ions with high affinity. The chain is Annexin A2-A (anxa2-a) from Xenopus laevis (African clawed frog).